The sequence spans 452 residues: Gamma-aminobutyric acid receptor subunit delta (452 aa).

The signal sequence occupies residues M1–A24. Residues M25–I251 are Extracellular-facing. N103 and N106 each carry an N-linked (GlcNAc...) asparagine glycan. An intrachain disulfide couples C164 to C178. Residues I252–I271 traverse the membrane as a helical segment. Residues S272–A275 are Cytoplasmic-facing. A helical transmembrane segment spans residues V276–R298. Topologically, residues S299–K308 are extracellular. Residues A309 to A331 traverse the membrane as a helical segment. Topologically, residues H332 to T426 are cytoplasmic. S390 carries the phosphoserine modification. A helical transmembrane segment spans residues I427–A449. Residues Y450–M452 lie on the Extracellular side of the membrane.

It belongs to the ligand-gated ion channel (TC 1.A.9) family. Gamma-aminobutyric acid receptor (TC 1.A.9.5) subfamily. GABRD sub-subfamily. In terms of assembly, heteropentamer, formed by a combination of alpha (GABRA1-6), beta (GABRB1-3), gamma (GABRG1-3), delta (GABRD), epsilon (GABRE), rho (GABRR1-3), pi (GABRP) and theta (GABRQ) chains, each subunit exhibiting distinct physiological and pharmacological properties.

It localises to the cell membrane. It carries out the reaction chloride(in) = chloride(out). Functionally, delta subunit of the heteropentameric ligand-gated chloride channel gated by gamma-aminobutyric acid (GABA), a major inhibitory neurotransmitter in the brain. GABA-gated chloride channels, also named GABA(A) receptors (GABAAR), consist of five subunits arranged around a central pore and contain GABA active binding site(s) located at the alpha and beta subunit interface(s). When activated by GABA, GABAARs selectively allow the flow of chloride anions across the cell membrane down their electrochemical gradient. GABAARs containing delta/GABRD subunits are predominantly located in extrasynaptic or perisynaptic positions on hippocampus and cerebellar granule cells, and contribute to the tonic GABAergic inhibition. GABAAR containing alpha-4-beta-3-delta subunits can simultaneously bind GABA and histamine where histamine binds at the interface of two neighboring beta subunits, which may be involved in the regulation of sleep and wakefulness. The polypeptide is Gamma-aminobutyric acid receptor subunit delta (Homo sapiens (Human)).